Here is a 342-residue protein sequence, read N- to C-terminus: Protein BMEI1586 (342 aa).

Ser90 functions as the Proton acceptor in the catalytic mechanism. Substrate-binding positions include Gly91–Ser92, Asp251, and Gly256–Thr257.

Belongs to the proline racemase family. In terms of assembly, homotetramer.

It catalyses the reaction trans-4-hydroxy-L-proline = cis-4-hydroxy-D-proline. In vitro, catalyzes the epimerization of trans-4-hydroxy-L-proline (t4LHyp) to cis-4-hydroxy-D-proline (c4DHyp) and that of trans-3-hydroxy-L-proline (t3LHyp) to cis-3-hydroxy-D-proline (c3DHyp), albeit with very low efficiency. The physiological substrate may be different. Displays neither proline racemase activity nor t3LHyp dehydratase activity. This chain is Protein BMEI1586, found in Brucella melitensis biotype 1 (strain ATCC 23456 / CCUG 17765 / NCTC 10094 / 16M).